Here is a 321-residue protein sequence, read N- to C-terminus: Serine/threonine-protein phosphatase PP1 (321 aa).

Residues D60, H62, D88, and N120 each coordinate Mn(2+). The Proton donor role is filled by H121. The Mn(2+) site is built by H169 and H244. Residues 298–321 (KKLTNDSNGRPLTPPRNKQQKPKK) form a disordered region.

The protein belongs to the PPP phosphatase family. As to quaternary structure, interacts with dpiA. Mn(2+) serves as cofactor.

It carries out the reaction O-phospho-L-seryl-[protein] + H2O = L-seryl-[protein] + phosphate. The catalysed reaction is O-phospho-L-threonyl-[protein] + H2O = L-threonyl-[protein] + phosphate. Its activity is regulated as follows. Inhibited by okadaic acid, tautomycin and calyculin A. Inhibited by phosphatase inhibitor 2 (dpiA). Protein phosphatase activity in vitro. In Dictyostelium discoideum (Social amoeba), this protein is Serine/threonine-protein phosphatase PP1 (pppB).